Here is a 626-residue protein sequence, read N- to C-terminus: Chaperone protein DnaK (626 aa).

Residue Thr-175 is modified to Phosphothreonine; by autocatalysis. 3 disordered regions span residues Asp-469–Lys-488, Ala-498–Gln-517, and Ala-583–Lys-626. Residues Ala-498–Asn-516 are compositionally biased toward basic and acidic residues. The segment covering Ser-609 to Lys-626 has biased composition (acidic residues).

Belongs to the heat shock protein 70 family.

Functionally, acts as a chaperone. This chain is Chaperone protein DnaK, found in Bifidobacterium adolescentis (strain ATCC 15703 / DSM 20083 / NCTC 11814 / E194a).